Consider the following 139-residue polypeptide: ATP synthase epsilon chain (139 aa).

Belongs to the ATPase epsilon chain family. In terms of assembly, F-type ATPases have 2 components, CF(1) - the catalytic core - and CF(0) - the membrane proton channel. CF(1) has five subunits: alpha(3), beta(3), gamma(1), delta(1), epsilon(1). CF(0) has three main subunits: a, b and c.

Its subcellular location is the cell inner membrane. Its function is as follows. Produces ATP from ADP in the presence of a proton gradient across the membrane. The protein is ATP synthase epsilon chain of Acinetobacter baumannii (strain AB307-0294).